Consider the following 721-residue polypeptide: Fatty acid oxidation complex subunit alpha (721 aa).

Positions 1 to 190 (MIYEGKAITV…KVGAVDAVVA (190 aa)) are enoyl-CoA hydratase/isomerase. Asp-297 is a binding site for substrate. The segment at 312-721 (KDVKQAAVLG…SFFGQASSEE (410 aa)) is 3-hydroxyacyl-CoA dehydrogenase. Residues Met-325, Asp-344, 401–403 (VVE), Lys-408, and Ser-430 contribute to the NAD(+) site. His-451 serves as the catalytic For 3-hydroxyacyl-CoA dehydrogenase activity. An NAD(+)-binding site is contributed by Asn-454. Positions 501 and 660 each coordinate substrate.

In the N-terminal section; belongs to the enoyl-CoA hydratase/isomerase family. It in the C-terminal section; belongs to the 3-hydroxyacyl-CoA dehydrogenase family. Heterotetramer of two alpha chains (FadB) and two beta chains (FadA).

The enzyme catalyses a (3S)-3-hydroxyacyl-CoA + NAD(+) = a 3-oxoacyl-CoA + NADH + H(+). The catalysed reaction is a (3S)-3-hydroxyacyl-CoA = a (2E)-enoyl-CoA + H2O. It carries out the reaction a 4-saturated-(3S)-3-hydroxyacyl-CoA = a (3E)-enoyl-CoA + H2O. It catalyses the reaction (3S)-3-hydroxybutanoyl-CoA = (3R)-3-hydroxybutanoyl-CoA. The enzyme catalyses a (3Z)-enoyl-CoA = a 4-saturated (2E)-enoyl-CoA. The catalysed reaction is a (3E)-enoyl-CoA = a 4-saturated (2E)-enoyl-CoA. The protein operates within lipid metabolism; fatty acid beta-oxidation. Its function is as follows. Involved in the aerobic and anaerobic degradation of long-chain fatty acids via beta-oxidation cycle. Catalyzes the formation of 3-oxoacyl-CoA from enoyl-CoA via L-3-hydroxyacyl-CoA. It can also use D-3-hydroxyacyl-CoA and cis-3-enoyl-CoA as substrate. The sequence is that of Fatty acid oxidation complex subunit alpha from Pseudomonas syringae pv. syringae (strain B728a).